A 165-amino-acid polypeptide reads, in one-letter code: MSTAQAVKIGIAEMEVVIAPNVIRTCGLGSCVGVVIYDAGKAVAGMAHVMLPHSSMARGGVINAAKYADTAVEALVQLVIAAGGRKGMLKAKLAGGAQMFSFSTVGGDMMRIGARNVEEVKKQLERLHIPVVAEDVGGHSGRTIEFNPQTGVLSIRTAAQEIKEI.

This sequence belongs to the CheD family.

The enzyme catalyses L-glutaminyl-[protein] + H2O = L-glutamyl-[protein] + NH4(+). Functionally, probably deamidates glutamine residues to glutamate on methyl-accepting chemotaxis receptors (MCPs), playing an important role in chemotaxis. The protein is Probable chemoreceptor glutamine deamidase CheD of Geobacillus kaustophilus (strain HTA426).